Consider the following 144-residue polypeptide: Bacilliredoxin BH1716 (144 aa).

This sequence belongs to the bacilliredoxin family.

The polypeptide is Bacilliredoxin BH1716 (Halalkalibacterium halodurans (strain ATCC BAA-125 / DSM 18197 / FERM 7344 / JCM 9153 / C-125) (Bacillus halodurans)).